The primary structure comprises 468 residues: Protein maelstrom 2 (468 aa).

Residues 2–69 (PPKKHSGFMM…LTRVKKERLN (68 aa)) constitute a DNA-binding region (HMG box). The tract at residues 374 to 393 (KEDSPTVLSPASSRRSLASS) is disordered. A compositionally biased stretch (low complexity) spans 381-393 (LSPASSRRSLASS).

The protein belongs to the maelstrom family.

It localises to the cytoplasm. The protein localises to the nucleus. Functionally, involved both in the piRNA and miRNA metabolic processes. As a component of the meiotic nuage, plays a central role during oogenesis by repressing transposable elements and preventing their mobilization, which is essential for the germline integrity. Repression of transposable elements is mediated via the piRNA metabolic process, which mediates the repression of transposable elements during meiosis by forming complexes composed of piRNAs and Piwi proteins and governs the repression of transposons. As a nuclear component, it is required for proper differentiation in the germline stem cell (GSC) lineage by repressing microRNA-7 (miR-7), thereby acting as an indirect regulator of bag-of-marbles (Bam). Acts by binding to the promoter of miR-7 gene and repressing its expression; miR-7 repression alleviates the Bam repression by miR-7, thereby allowing differentiation in the germline stem cell (GSC) lineage. In Drosophila ananassae (Fruit fly), this protein is Protein maelstrom 2 (mael2).